A 696-amino-acid polypeptide reads, in one-letter code: UvrABC system protein B (696 aa).

One can recognise a Helicase ATP-binding domain in the interval 46-433; that stretch reads EGVEDGLSFQ…SGQTAEQVVR (388 aa). 59–66 provides a ligand contact to ATP; sequence GVTGSGKT. The Beta-hairpin signature appears at 112 to 135; it reads YYDYYQPEAYVPQRDLFIEKDSSI. One can recognise a Helicase C-terminal domain in the interval 450–616; sequence QVDDVLSEIT…GVVKRIKDII (167 aa). Positions 647–682 constitute a UVR domain; sequence AKEIKRLEKQMADYAKNLEFEKAAQTRDQLALLRER.

The protein belongs to the UvrB family. As to quaternary structure, forms a heterotetramer with UvrA during the search for lesions. Interacts with UvrC in an incision complex.

Its subcellular location is the cytoplasm. Functionally, the UvrABC repair system catalyzes the recognition and processing of DNA lesions. A damage recognition complex composed of 2 UvrA and 2 UvrB subunits scans DNA for abnormalities. Upon binding of the UvrA(2)B(2) complex to a putative damaged site, the DNA wraps around one UvrB monomer. DNA wrap is dependent on ATP binding by UvrB and probably causes local melting of the DNA helix, facilitating insertion of UvrB beta-hairpin between the DNA strands. Then UvrB probes one DNA strand for the presence of a lesion. If a lesion is found the UvrA subunits dissociate and the UvrB-DNA preincision complex is formed. This complex is subsequently bound by UvrC and the second UvrB is released. If no lesion is found, the DNA wraps around the other UvrB subunit that will check the other stand for damage. The chain is UvrABC system protein B from Burkholderia mallei (strain ATCC 23344).